A 289-amino-acid polypeptide reads, in one-letter code: Protoheme IX farnesyltransferase (289 aa).

The next 9 helical transmembrane spans lie at 9–29, 40–60, 89–109, 110–130, 134–154, 155–175, 190–209, 228–248, and 269–289; these read VALM…PVMM, LIAV…TINC, LTFG…LVNW, PSAL…TLGL, TPSN…IGWS, AVTG…FFWT, YAAA…VVTR, VAST…WFLV, and FHMS…TALV.

This sequence belongs to the UbiA prenyltransferase family. Protoheme IX farnesyltransferase subfamily.

It is found in the cell membrane. The catalysed reaction is heme b + (2E,6E)-farnesyl diphosphate + H2O = Fe(II)-heme o + diphosphate. Its pathway is porphyrin-containing compound metabolism; heme O biosynthesis; heme O from protoheme: step 1/1. Converts heme B (protoheme IX) to heme O by substitution of the vinyl group on carbon 2 of heme B porphyrin ring with a hydroxyethyl farnesyl side group. This Frankia casuarinae (strain DSM 45818 / CECT 9043 / HFP020203 / CcI3) protein is Protoheme IX farnesyltransferase.